Reading from the N-terminus, the 781-residue chain is uncharacterized protein (781 aa).

Disordered stretches follow at residues 1–27 (MKKD…ELDD) and 56–268 (NLHI…SDVH). Positions 11–27 (ESLEEYDEENYTSELDD) are enriched in acidic residues. The segment covering 57 to 73 (LHIDEKSKGNIHDDTNK) has biased composition (basic and acidic residues). Over residues 80–94 (KRKGKLNNKKLKLKK) the composition is skewed to basic residues. Residues 99–116 (SDEEEENDKNDKNDDDQY) show a composition bias toward acidic residues. Basic and acidic residues-rich tracts occupy residues 123–144 (DEDR…KGDN), 170–188 (EKNH…HVSV), 216–227 (KTSKKNKNDKTN), and 251–268 (DDYH…SDVH). Positions 616 to 655 (NDTYTLSKLNNQINELTKKINILRGNLDKARKNHAAMKSN) form a coiled coil.

This is an uncharacterized protein from Plasmodium falciparum (isolate 3D7).